A 2005-amino-acid chain; its full sequence is Sodium channel protein type 2 subunit alpha (2005 aa).

The Cytoplasmic segment spans residues 1–129; that stretch reads MAQSVLVPPG…KLAIKILVHS (129 aa). The residue at position 4 (serine 4) is a Phosphoserine. The disordered stretch occupies residues 28 to 61; sequence RIAEEKAKRPKQERKDEDDENGPKPNSDLEAGKS. Lysine 38 participates in a covalent cross-link: Glycyl lysine isopeptide (Lys-Gly) (interchain with G-Cter in SUMO1). The I repeat unit spans residues 111-456; that stretch reads ILTPFNPIRK…QQMLEQLKKQ (346 aa). A helical membrane pass occupies residues 130–148; that stretch reads LFNMLIMCTILTNCVFMTM. At 149-155 the chain is on the extracellular side; it reads SNPPDWT. A helical transmembrane segment spans residues 156-176; the sequence is KNVEYTFTGIYTFESLIKILA. At 177–190 the chain is on the cytoplasmic side; that stretch reads RGFCLEDFTFLRDP. A helical membrane pass occupies residues 191-208; it reads WNWLDFTVITFAYVTEFV. Over 209–214 the chain is Extracellular; the sequence is DLGNVS. Asparagine 212 carries N-linked (GlcNAc...) asparagine glycosylation. A helical transmembrane segment spans residues 215–231; it reads ALRTFRVLRALKTISVI. Topologically, residues 232 to 250 are cytoplasmic; sequence PGLKTIVGALIQSVKKLSD. Residues 251-270 traverse the membrane as a helical segment; the sequence is VMILTVFCLSVFALIGLQLF. Over 271 to 369 the chain is Extracellular; it reads MGNLRNKCLQ…PNYGYTSFDT (99 aa). The cysteines at positions 278 and 338 are disulfide-linked. Asparagine 285, asparagine 291, asparagine 297, asparagine 303, asparagine 308, and asparagine 340 each carry an N-linked (GlcNAc...) asparagine glycan. The segment at residues 370 to 394 is an intramembrane region (pore-forming); that stretch reads FSWAFLSLFRLMTQDFWENLYQLTL. At 395–401 the chain is on the extracellular side; sequence RAAGKTY. Residues 402-422 form a helical membrane-spanning segment; that stretch reads MIFFVLVIFLGSFYLINLILA. Residues 423 to 759 are Cytoplasmic-facing; it reads VVAMAYEEQN…HLVNLVVMDP (337 aa). Serine 468, serine 471, serine 484, serine 526, serine 528, serine 531, serine 553, serine 554, serine 558, serine 573, serine 576, serine 589, serine 610, serine 623, serine 686, serine 687, and serine 721 each carry phosphoserine. The disordered stretch occupies residues 494-529; it reads SSKSEKELKNRRKKKKQKEQSGEEEKNDRVRKSESE. The span at 511 to 529 shows a compositional bias: basic and acidic residues; it reads KEQSGEEEKNDRVRKSESE. Residues 590 to 610 form a disordered region; it reads ENDFADDEHSTFEDNDSRRDS. The span at 596–610 shows a compositional bias: basic and acidic residues; the sequence is DEHSTFEDNDSRRDS. The II repeat unit spans residues 741–1013; the sequence is CCKPWLKVKH…QIAVGRMQKG (273 aa). A helical transmembrane segment spans residues 760 to 778; sequence FVDLAITICIVLNTLFMAM. At 779 to 789 the chain is on the extracellular side; sequence EHYPMTEQFSS. The helical transmembrane segment at 790-809 threads the bilayer; that stretch reads VLSVGNLVFTGIFTAEMFLK. Residues 810–823 lie on the Cytoplasmic side of the membrane; that stretch reads IIAMDPYYYFQEGW. The helical transmembrane segment at 824 to 843 threads the bilayer; that stretch reads NIFDGFIVSLSLMELGLANV. At 844–845 the chain is on the extracellular side; that stretch reads EG. The helical transmembrane segment at 846-863 threads the bilayer; sequence LSVLRSFRLLRVFKLAKS. At 864 to 879 the chain is on the cytoplasmic side; it reads WPTLNMLIKIIGNSVG. Residues 880-898 traverse the membrane as a helical segment; it reads ALGNLTLVLAIIVFIFAVV. At 899-927 the chain is on the extracellular side; it reads GMQLFGKSYKECVCKISNDCELPRWHMHD. A disulfide bridge connects residues cysteine 912 and cysteine 918. The interval 917–918 is binds SCN2B; sequence DC. The pore-forming intramembrane region spans 928–948; sequence FFHSFLIVFRVLCGEWIETMW. Residues 949–961 lie on the Extracellular side of the membrane; that stretch reads DCMEVAGQTMCLT. A disulfide bond links cysteine 950 and cysteine 959. A helical transmembrane segment spans residues 962–982; that stretch reads VFMMVMVIGNLVVLNLFLALL. Topologically, residues 983-1209 are cytoplasmic; sequence LSSFSSDNLA…TCYKIVEHNW (227 aa). The segment at 1120–1165 is disordered; sequence EEFSSESDMEESKEKLNATSSSEGSTVDIGAPAEGEQPEVEPEESL. The segment covering 1155–1165 has biased composition (acidic residues); the sequence is EQPEVEPEESL. An III repeat occupies 1190–1504; the sequence is KGKLWWNLRK…KKYYNAMKKL (315 aa). Residues 1210-1227 form a helical membrane-spanning segment; the sequence is FETFIVFMILLSSGALAF. At 1228–1240 the chain is on the extracellular side; the sequence is EDIYIEQRKTIKT. Residues 1241–1259 traverse the membrane as a helical segment; the sequence is MLEYADKVFTYIFILEMLL. The Cytoplasmic segment spans residues 1260–1273; that stretch reads KWVAYGFQVYFTNA. Residues 1274–1292 form a helical membrane-spanning segment; that stretch reads WCWLDFLIVDVSLVSLTAN. At 1293–1300 the chain is on the extracellular side; that stretch reads ALGYSELG. Residues 1301–1319 traverse the membrane as a helical segment; sequence AIKSLRTLRALRPLRALSR. At 1320-1336 the chain is on the cytoplasmic side; it reads FEGMRVVVNALLGAIPS. The helical transmembrane segment at 1337 to 1356 threads the bilayer; the sequence is IMNVLLVCLIFWLIFSIMGV. Residues 1357–1408 are Extracellular-facing; the sequence is NLFAGKFYHCINYTTGEMFDVSVVNNYSECKALIESNQTARWKNVKVNFDNV. Cysteine 1366 and cysteine 1386 are disulfide-bonded. Asparagine 1368, asparagine 1382, and asparagine 1393 each carry an N-linked (GlcNAc...) asparagine glycan. Residues 1409–1430 constitute an intramembrane region (pore-forming); sequence GLGYLSLLQVATFKGWMDIMYA. The Extracellular portion of the chain corresponds to 1431–1447; sequence AVDSRNVELQPKYEDNL. The helical transmembrane segment at 1448–1469 threads the bilayer; that stretch reads YMYLYFVIFIIFGSFFTLNLFI. Over 1470–1532 the chain is Cytoplasmic; the sequence is GVIIDNFNQQ…MVFDFVTKQV (63 aa). Phosphoserine; by PKC is present on serine 1506. An IV repeat occupies 1513-1811; that stretch reads IPRPANKFQG…WEKFDPDATQ (299 aa). A helical transmembrane segment spans residues 1533–1550; sequence FDISIMILICLNMVTMMV. The Extracellular portion of the chain corresponds to 1551 to 1561; that stretch reads ETDDQSQEMTN. A helical transmembrane segment spans residues 1562 to 1580; sequence ILYWINLVFIVLFTGECVL. Topologically, residues 1581–1592 are cytoplasmic; that stretch reads KLISLRYYYFTI. A helical membrane pass occupies residues 1593–1610; that stretch reads GWNIFDFVVVILSIVGMF. Residues 1611 to 1623 are Extracellular-facing; that stretch reads LAELIEKYFVSPT. A helical membrane pass occupies residues 1624 to 1640; sequence LFRVIRLARIGRILRLI. Topologically, residues 1641–1659 are cytoplasmic; that stretch reads KGAKGIRTLLFALMMSLPA. A helical transmembrane segment spans residues 1660–1677; that stretch reads LFNIGLLLFLVMFIYAIF. At 1678–1699 the chain is on the extracellular side; it reads GMSNFAYVKREVGIDDMFNFET. The segment at residues 1700 to 1722 is an intramembrane region (pore-forming); it reads FGNSMICLFQITTSAGWDGLLAP. Residues 1723–1752 are Extracellular-facing; sequence ILNSGPPDCDPDKDHPGSSVKGDCGNPSVG. Cysteines 1731 and 1746 form a disulfide. The helical transmembrane segment at 1753 to 1775 threads the bilayer; it reads IFFFVSYIIISFLVVVNMYIAVI. Topologically, residues 1776 to 2005 are cytoplasmic; that stretch reads LENFSVATEE…KGKDIRESKK (230 aa). Residues 1905–1934 form the IQ domain; the sequence is EEVSAIIIQRAYRRYLLKQKVKKVSSIYKK. Residue serine 1930 is modified to Phosphoserine. The segment covering 1935 to 1964 has biased composition (basic and acidic residues); the sequence is DKGKECDGTPIKEDTLIDKLNENSTPEKTD. The segment at 1935–2005 is disordered; sequence DKGKECDGTP…KGKDIRESKK (71 aa). Phosphothreonine occurs at positions 1943, 1963, and 1966. Serine 1971 bears the Phosphoserine mark. The segment covering 1979-2005 has biased composition (basic and acidic residues); it reads TKPEKEKFEKDKSEKEDKGKDIRESKK.

It belongs to the sodium channel (TC 1.A.1.10) family. Nav1.2/SCN2A subfamily. In terms of assembly, heterooligomer of a large alpha subunit and a smaller beta subunit. Heterooligomer with SCN2B or SCN4B; disulfide-linked. Heterooligomer with SCN1B or SCN3B; non-covalently linked. Interacts with NEDD4L. Interacts with CALM. Interacts with TMEM233. Interacts with the conotoxin GVIIJ. Interacts with the spider beta/delta-theraphotoxin-Pre1a. Interacts with the conotoxin KIIIA. Interacts with the spider protoxin-II. May be ubiquitinated by NEDD4L; which would promote its endocytosis. Post-translationally, phosphorylation at Ser-1506 by PKC in a highly conserved cytoplasmic loop slows inactivation of the sodium channel and reduces peak sodium currents. In terms of processing, sumoylated at Lys-38. Sumoylation is induced by hypoxia, increases voltage-gated sodium current and mediates the early response to acute hypoxia in neurons. Sumoylated SCN2A is located at the cell membrane.

It is found in the cell membrane. The enzyme catalyses Na(+)(in) = Na(+)(out). Mediates the voltage-dependent sodium ion permeability of excitable membranes. Assuming opened or closed conformations in response to the voltage difference across the membrane, the protein forms a sodium-selective channel through which Na(+) ions may pass in accordance with their electrochemical gradient. Implicated in the regulation of hippocampal replay occurring within sharp wave ripples (SPW-R) important for memory. This chain is Sodium channel protein type 2 subunit alpha, found in Homo sapiens (Human).